Reading from the N-terminus, the 343-residue chain is NAC domain-containing protein 4 (343 aa).

An NAC domain is found at 12-168 (LPPGFRFHPT…EWVLCRVFKK (157 aa)). Residues 109–174 (VGMKKTLVFY…VFKKSLVEVG (66 aa)) mediate DNA binding. The tract at residues 304-333 (GGERERLSASQDTGLTSDVNPEISSSSGQK) is disordered. The span at 311 to 332 (SASQDTGLTSDVNPEISSSSGQ) shows a compositional bias: polar residues.

In terms of tissue distribution, expressed in roots, tiller buds, stems, leaves, lamina joints and the young husks. Expressed in embryos, coleoptiles, radicles, leaf pulvinus, ligules, panicles, palea and lemma, anthers, and the internode of the peduncles. Expressed in young leaves, root meristems, florescence meristems and young spikelets.

The protein resides in the nucleus. Functionally, transcription factor involved in the regulation of tiller bud outgrowth, but does not seem to regulate tiller bud initiation. Possesses transactivation activity in yeast. Involved in the regulation of plant architecture and grain yield. Acts as a negative regulator of plant height and flowering time. Regulates directly key genes of the gibberellin (GA) pathway by binding to their promoters. Positively regulates leaf senescence in an age-dependent manner. Activates directly the expression of the chlorophyll degradation genes SGR and NYC3. Positively regulates the level of abscisic acid (ABA) by directly up-regulating the expression of the ABA biosynthetic genes NCED3 and ZEP, and down-regulating the ABA catabolic gene CYP707A5/ABA8OX1. Promotes salt-induced cell death accompanied by the loss of plasma membrane integrity, nuclear DNA fragmentation, and changes of caspase-like activity. Targets genes that encoded a reactive oxygen species (ROS) scavenger COX11 and a caspase-like protease AP37. Activates the potassium efflux channels GORK and SKOR. Acts as a positive regulator of drought and salt tolerance through ABA-mediated pathways. Acts as a negative regulator of root growth. Functions as an upstream integrator of auxin and cytokinin signals that affect CROWN ROOTLESS (CRL) and cyclin-dependent protein kinase (CDK) genes to regulate cell division during root development. Binds directly to the promoters of the auxin inactivation-related genes GH3.6 and GH3.8, the auxin signaling-related gene ARF25, and the cytokinin oxidase gene CKX4. Activates directly the expressions of the 1-aminocyclopropane-1-carboxylate oxidase genes ACO1 and ACO3, enhancing ethylene synthesis, and then retarding seedling establishment. The chain is NAC domain-containing protein 4 from Oryza sativa subsp. japonica (Rice).